The following is a 410-amino-acid chain: Peptidase T (410 aa).

Histidine 79 contacts Zn(2+). The active site involves aspartate 81. Aspartate 142 serves as a coordination point for Zn(2+). Catalysis depends on glutamate 176, which acts as the Proton acceptor. Residues glutamate 177, aspartate 199, and histidine 381 each coordinate Zn(2+).

This sequence belongs to the peptidase M20B family. It depends on Zn(2+) as a cofactor.

The protein resides in the cytoplasm. It catalyses the reaction Release of the N-terminal residue from a tripeptide.. Its function is as follows. Cleaves the N-terminal amino acid of tripeptides. The protein is Peptidase T of Geobacillus sp. (strain WCH70).